Reading from the N-terminus, the 612-residue chain is Actin-binding LIM protein 2 (612 aa).

4 LIM zinc-binding domains span residues 22–81 (ILCN…LYGT), 81–141 (TRCF…TLLG), 151–210 (RSCG…KFGI), and 210–270 (IRCD…ARTE). C83, C86, H103, C106, C109, C112, C131, and C134 together coordinate Zn(2+). Residues C212, C215, H232, C235, C238, C241, H260, and C263 each coordinate Zn(2+). Residues 269 to 278 (TEDKSKETRT) show a composition bias toward basic and acidic residues. 2 disordered regions span residues 269–295 (TEDKSKETRTSSESIVSVPASSTSGSP) and 341–433 (AVGD…DNIY). The span at 279–295 (SSESIVSVPASSTSGSP) shows a compositional bias: low complexity. S282, S294, G351, R356, S365, and S368 each carry phosphoserine. Positions 364–373 (SSPSSAGSVS) are enriched in low complexity. Residues 394–416 (SGRSTPSLSVHSDSRPPSSTYQQ) are compositionally biased toward polar residues. S453 carries the post-translational modification Phosphoserine. Positions 471–498 (ADTRTNSPDLDSQSLSLSSGTDQEPLQR) are disordered. T473 bears the Phosphothreonine mark. Phosphoserine occurs at positions 477 and 579. A compositionally biased stretch (low complexity) spans 477 to 489 (SPDLDSQSLSLSS). The region spanning 544–612 (TREYKIYPYD…NDLKKKALLF (69 aa)) is the HP domain.

As to quaternary structure, interacts with F-actin and ABRA. Expressed in brain. Highly expressed in caudate/putamen, moderately expressed in the olfactory bulb. In the hippocampus, expressed in the CA1, CA2 and CA3 fields. In the cerebellum, expressed in Purkinje cells.

Its subcellular location is the cytoplasm. In terms of biological role, may act as scaffold protein. May stimulate ABRA activity and ABRA-dependent SRF transcriptional activity. The sequence is that of Actin-binding LIM protein 2 (Ablim2) from Mus musculus (Mouse).